The sequence spans 626 residues: Putative ankyrin repeat protein R837 (626 aa).

ANK repeat units lie at residues 42–72 (EYFNLIDFIIETKSMEVLKYIYQSKTNGLIR), 80–109 (TLNTSLLTSCQNGNILLVKFFIEKGANHRY), 110–139 (SEDKPLGIAAANGHSDIVEYLVNGGANIKS), 140–169 (RNNYALRFAVKNGHYNMVKFLIEQGVDITV), 171–199 (DYEVFYTSCEYGHYEIFVYLMKNINDIKK), 201–230 (NKKRLLKKAFKGGSVKIVHYIFNDILDVYR), 242–269 (KNYKLLNIIGKYGNHDILEYLHNRYQLS), 270–298 (DTNNIAQVAALYGHFRIVKFLLDKYLHEL), 299–328 (NLNQLIISACDNGSIKMVKFLIEKGIDINT), 330–358 (GNSCLSHAILSGNTDLLHYLTNIGCRLTS), 393–416 (TIMSTSMYCGIIKLVKYFVDKSSL), 417–446 (DYESYICGIISNGHVNIIKYLLNQNKITKQ), 452–479 (INNSVILTIIQYGHIDMLKYLVSLGINI), 480–509 (CINYALDRAVSYGHLNIVEYLLELGHNINE), 510–539 (FGDLPLRSATIANNINMVKYLVSQGANIYI), 540–569 (IKDNPIYLASIHGHVKLVKYFIDLGSDYHK), 570–599 (KNELPLYVAIINNNLDVVKCLVEHGCKTKT), and 601–626 (FFDPIETAMEYYNNEIVEYLQNNEIK).

This chain is Putative ankyrin repeat protein R837, found in Acanthamoeba polyphaga (Amoeba).